The sequence spans 424 residues: Probable methyltransferase EP424R (424 aa).

The Adrift-type SAM-dependent 2'-O-MTase domain maps to 103-315 (QIVTNAWLKM…TYIVGKNRLR (213 aa)). Positions 135 and 228 each coordinate S-adenosyl-L-methionine. Catalysis depends on lysine 268, which acts as the Proton acceptor.

It is found in the virion. This Ornithodoros (relapsing fever ticks) protein is Probable methyltransferase EP424R.